A 198-amino-acid chain; its full sequence is Photosystem I assembly protein Ycf4 (198 aa).

The tract at residues 1-20 (MTASTTINKGDSPNGDSSAS) is disordered. Transmembrane regions (helical) follow at residues 38–58 (WASI…SSYL) and 78–98 (LVMG…WLAI).

Belongs to the Ycf4 family.

The protein resides in the cellular thylakoid membrane. In terms of biological role, seems to be required for the assembly of the photosystem I complex. This is Photosystem I assembly protein Ycf4 from Trichormus variabilis (strain ATCC 29413 / PCC 7937) (Anabaena variabilis).